The primary structure comprises 299 residues: Inosose dehydratase (299 aa).

Belongs to the IolE/MocC family. Glutathione is required as a cofactor. Requires Co(2+) as cofactor. The cofactor is Mn(2+).

It catalyses the reaction scyllo-inosose = 3D-3,5/4-trihydroxycyclohexane-1,2-dione + H2O. In terms of biological role, catalyzes the dehydration of inosose (2-keto-myo-inositol, 2KMI or 2,4,6/3,5-pentahydroxycyclohexanone) to 3D-(3,5/4)-trihydroxycyclohexane-1,2-dione (D-2,3-diketo-4-deoxy-epi-inositol). This Klebsiella pneumoniae (strain 342) protein is Inosose dehydratase.